The sequence spans 183 residues: Caltractin ICL1c (183 aa).

The tract at residues 1–30 (MARRGQQPPPQQQQAPPTQKNQAGKFNPAE) is disordered. 4 EF-hand domains span residues 39-74 (EEVL…LGFE), 75-110 (AKNQ…RISE), 112-147 (DSKA…LGET), and 148-183 (MDDS…KTFA). Positions 52, 54, 56, 58, 63, 88, 90, 92, 94, and 99 each coordinate Ca(2+).

This sequence belongs to the centrin family. In terms of assembly, monomer.

The protein resides in the cytoplasm. It is found in the cytoskeleton. Functionally, plays a fundamental role in microtubule organizing center structure and function. Component of the infraciliary lattice (ICL) and the ciliary basal bodies. The protein is Caltractin ICL1c (Icl1c) of Paramecium tetraurelia.